The sequence spans 156 residues: MIIRKFSSKDLDAVEEIEREAFKTPYPTSLILGFWSMYPNCFYVAEIDGRVVGYILGSMDWGNGHIISLAVKKECRGLGIGTALLKTLENYYFNIANCNYIVLEVRVSNVLARRFYYRMGYRDRKLLPKYYEDGEDAILMIKKKPNAKGPLIITLW.

The N-acetyltransferase domain occupies 1–145 (MIIRKFSSKD…DAILMIKKKP (145 aa)).

Belongs to the acetyltransferase family.

Its subcellular location is the cytoplasm. This is an uncharacterized protein from Methanocaldococcus jannaschii (strain ATCC 43067 / DSM 2661 / JAL-1 / JCM 10045 / NBRC 100440) (Methanococcus jannaschii).